Here is a 376-residue protein sequence, read N- to C-terminus: Alpha-2,8-sialyltransferase 8E (376 aa).

Residues 1–17 lie on the Cytoplasmic side of the membrane; the sequence is MRYADPSANRDLLGNRT. A helical; Signal-anchor for type II membrane protein membrane pass occupies residues 18-38; sequence LLFIFICAFALVTLLQQILYG. Residues 39–376 are Lumenal-facing; it reads RNYIKRYFEF…RVHTGTCSCC (338 aa). Residues Asn-56 and Asn-96 are each glycosylated (N-linked (GlcNAc...) asparagine). Cystine bridges form between Cys-164/Cys-313 and Cys-178/Cys-373. Substrate-binding positions include Asn-192 and 214–216; that span reads NPS. Residues Asn-241 and Asn-284 are each glycosylated (N-linked (GlcNAc...) asparagine). Residue 300–302 participates in substrate binding; that stretch reads STG. His-348 (proton donor/acceptor) is an active-site residue.

The protein belongs to the glycosyltransferase 29 family.

Its subcellular location is the golgi apparatus membrane. It carries out the reaction a ganglioside GQ1c (d18:1(4E)) + CMP-N-acetyl-beta-neuraminate = a ganglioside GP1c (d18:1(4E)) + CMP + H(+). The protein operates within protein modification; protein glycosylation. Its function is as follows. Involved in the synthesis of gangliosides GD1c, GT1a, GQ1b, GP1c and GT3 from GD1a, GT1b, GM1b and GD3 respectively. The sequence is that of Alpha-2,8-sialyltransferase 8E (ST8SIA5) from Pan troglodytes (Chimpanzee).